Consider the following 480-residue polypeptide: Probable G-protein coupled receptor Mth-like 6 (480 aa).

Residues 1–20 (MLLNILAIILVFVISSQSEA) form the signal peptide. Topologically, residues 21–202 (VIPGCDYFDT…LEHVYIPKSM (182 aa)) are extracellular. 4 cysteine pairs are disulfide-bonded: Cys25–Cys78, Cys80–Cys85, Cys89–Cys179, and Cys90–Cys101. Asn40 is a glycosylation site (N-linked (GlcNAc...) asparagine). N-linked (GlcNAc...) asparagine glycosylation is found at Asn160 and Asn170. Residues 203-225 (PAVPQVGTISMVGCILTIAVYLY) traverse the membrane as a helical segment. The Cytoplasmic portion of the chain corresponds to 226-231 (IKKLRN). Residues 232 to 254 (LLGKCFICYVFCKFVQYLIWAGG) form a helical membrane-spanning segment. Topologically, residues 255 to 263 (DLNLWNNIC) are extracellular. A helical membrane pass occupies residues 264–283 (SLAGYTNYFFALASHFWLSV). Over 284–303 (MSHQIWKNLRLINRDERSYH) the chain is Cytoplasmic. Residues 304–326 (FLIYNIYGWGTPAIMTAITYLVD) form a helical membrane-spanning segment. The Extracellular portion of the chain corresponds to 327-356 (WAWEDRPDKLNWIPGVGLYRCWINTYDWSA). A helical transmembrane segment spans residues 357-379 (MIYLYGPMLILSLFNVVTFILTV). At 380–405 (NHIMKIKSSVKSSTQQQRKCIQNNDF) the chain is on the cytoplasmic side. The chain crosses the membrane as a helical span at residues 406–428 (LLYLRLSVMMGVTGISEVITYFV). Residues 429–437 (KRHKFWRQV) lie on the Extracellular side of the membrane. The helical transmembrane segment at 438–457 (LRVPNFFHLGSGIVVFVLFI) threads the bilayer. At 458–480 (LKRSTFQMIMERISGPRRQQPAS) the chain is on the cytoplasmic side.

Belongs to the G-protein coupled receptor 2 family. Mth subfamily.

Its subcellular location is the cell membrane. This Drosophila melanogaster (Fruit fly) protein is Probable G-protein coupled receptor Mth-like 6 (mthl6).